The chain runs to 332 residues: Glycerol-3-phosphate dehydrogenase [NAD(P)+] (332 aa).

Residues Ser14, Trp15, Arg35, and Lys107 each coordinate NADPH. Lys107, Gly137, and Ser139 together coordinate sn-glycerol 3-phosphate. An NADPH-binding site is contributed by Ala141. 5 residues coordinate sn-glycerol 3-phosphate: Lys192, Asp245, Ser255, Arg256, and Asn257. The active-site Proton acceptor is Lys192. Position 256 (Arg256) interacts with NADPH. Residues Val280 and Glu282 each coordinate NADPH.

Belongs to the NAD-dependent glycerol-3-phosphate dehydrogenase family.

The protein localises to the cytoplasm. It catalyses the reaction sn-glycerol 3-phosphate + NAD(+) = dihydroxyacetone phosphate + NADH + H(+). It carries out the reaction sn-glycerol 3-phosphate + NADP(+) = dihydroxyacetone phosphate + NADPH + H(+). Its pathway is membrane lipid metabolism; glycerophospholipid metabolism. Its function is as follows. Catalyzes the reduction of the glycolytic intermediate dihydroxyacetone phosphate (DHAP) to sn-glycerol 3-phosphate (G3P), the key precursor for phospholipid synthesis. This is Glycerol-3-phosphate dehydrogenase [NAD(P)+] from Desulfovibrio desulfuricans (strain ATCC 27774 / DSM 6949 / MB).